The primary structure comprises 310 residues: Tagatose-6-phosphate kinase (310 aa).

Belongs to the carbohydrate kinase PfkB family. LacC subfamily.

The catalysed reaction is D-tagatofuranose 6-phosphate + ATP = D-tagatofuranose 1,6-bisphosphate + ADP + H(+). It functions in the pathway carbohydrate metabolism; D-tagatose 6-phosphate degradation; D-glyceraldehyde 3-phosphate and glycerone phosphate from D-tagatose 6-phosphate: step 1/2. This chain is Tagatose-6-phosphate kinase, found in Staphylococcus epidermidis (strain ATCC 35984 / DSM 28319 / BCRC 17069 / CCUG 31568 / BM 3577 / RP62A).